We begin with the raw amino-acid sequence, 144 residues long: Flagellar assembly factor FliW (144 aa).

The protein belongs to the FliW family. Interacts with translational regulator CsrA and flagellin(s).

The protein localises to the cytoplasm. Acts as an anti-CsrA protein, binds CsrA and prevents it from repressing translation of its target genes, one of which is flagellin. Binds to flagellin and participates in the assembly of the flagellum. The chain is Flagellar assembly factor FliW from Geobacillus sp. (strain WCH70).